Consider the following 225-residue polypeptide: NAD(P)H-quinone oxidoreductase subunit K, chloroplastic (225 aa).

The [4Fe-4S] cluster site is built by cysteine 43, cysteine 44, cysteine 108, and cysteine 139.

It belongs to the complex I 20 kDa subunit family. As to quaternary structure, NDH is composed of at least 16 different subunits, 5 of which are encoded in the nucleus. Requires [4Fe-4S] cluster as cofactor.

Its subcellular location is the plastid. The protein resides in the chloroplast thylakoid membrane. It catalyses the reaction a plastoquinone + NADH + (n+1) H(+)(in) = a plastoquinol + NAD(+) + n H(+)(out). The catalysed reaction is a plastoquinone + NADPH + (n+1) H(+)(in) = a plastoquinol + NADP(+) + n H(+)(out). In terms of biological role, NDH shuttles electrons from NAD(P)H:plastoquinone, via FMN and iron-sulfur (Fe-S) centers, to quinones in the photosynthetic chain and possibly in a chloroplast respiratory chain. The immediate electron acceptor for the enzyme in this species is believed to be plastoquinone. Couples the redox reaction to proton translocation, and thus conserves the redox energy in a proton gradient. In Olimarabidopsis pumila (Dwarf rocket), this protein is NAD(P)H-quinone oxidoreductase subunit K, chloroplastic.